The primary structure comprises 596 residues: Elongation factor 4 (596 aa).

A tr-type G domain is found at 2 to 183 (KNIRNFSIIA…TIITKIPAPK (182 aa)). GTP-binding positions include 14–19 (DHGKST) and 130–133 (NKID).

Belongs to the TRAFAC class translation factor GTPase superfamily. Classic translation factor GTPase family. LepA subfamily.

The protein localises to the cell inner membrane. The catalysed reaction is GTP + H2O = GDP + phosphate + H(+). Its function is as follows. Required for accurate and efficient protein synthesis under certain stress conditions. May act as a fidelity factor of the translation reaction, by catalyzing a one-codon backward translocation of tRNAs on improperly translocated ribosomes. Back-translocation proceeds from a post-translocation (POST) complex to a pre-translocation (PRE) complex, thus giving elongation factor G a second chance to translocate the tRNAs correctly. Binds to ribosomes in a GTP-dependent manner. The chain is Elongation factor 4 from Campylobacter lari (strain RM2100 / D67 / ATCC BAA-1060).